Reading from the N-terminus, the 672-residue chain is DNA polymerase eta (672 aa).

Residues 14 to 254 (IAHVDMDCFY…LPIKKMKQLG (241 aa)) enclose the UmuC domain. Mg(2+)-binding residues include Asp-18 and Met-19. Residues Asp-18 and Met-19 each coordinate Mn(2+). A 2'-deoxyribonucleoside 5'-triphosphate contacts are provided by Tyr-23 and Arg-60. Mg(2+)-binding residues include Asp-120 and Glu-121. Residues Asp-120 and Glu-121 each coordinate Mn(2+). The active-site Proton acceptor is the Glu-121. 2 DNA-binding regions span residues 318 to 325 (KTFPGPRA) and 362 to 383 (TLHASAFRSKDSDSHKKFPSKS). Disordered regions lie at residues 521–617 (VSCP…TDWG) and 648–672 (QFNTGKSKGDGSTSSIAHYFPPLNR). Polar residues-rich tracts occupy residues 523–544 (CPSNEATDVSTQSESNKGTQTK) and 570–586 (YNATPPSKQETQEDSTV). Low complexity-rich tracts occupy residues 587-602 (SSASKRAKLSSSSHNS) and 651-662 (TGKSKGDGSTSS).

The protein belongs to the DNA polymerase type-Y family. In terms of assembly, interacts with PCNA1 and PCNA2. The interaction with PCNA2 is required for translesion synthesis (TLS) to repair UV photoproducts. It depends on Mg(2+) as a cofactor. The cofactor is Mn(2+). Constitutively expressed in roots, stems, leaves, flowers and siliques.

Its subcellular location is the nucleus. The catalysed reaction is DNA(n) + a 2'-deoxyribonucleoside 5'-triphosphate = DNA(n+1) + diphosphate. The enzyme in complex with the DNA substrate binds a third divalent metal cation. The binding of this third divalent cation, which is coordinated by water molecules and two oxygen atoms from DNA and dNTP, is essential for catalyzing the DNA synthesis. Error-free DNA polymerase specifically involved in DNA repair. Plays an important role in translesion synthesis (TLS), where the normal high fidelity DNA polymerases cannot proceed and DNA synthesis stalls. Plays an important role in the repair of UV-induced pyrimidine dimers and confers resistance to ultraviolet light. Depending on the context, it inserts the correct base, but may cause base transitions and transversions. Forms a Schiff base with 5'-deoxyribose phosphate at abasic sites, but does not have lyase activity. Targets POLI to replication foci. Exhibits cyclobutane dimer nonmutagenic bypass activity in vitro. The chain is DNA polymerase eta (POLH) from Arabidopsis thaliana (Mouse-ear cress).